The following is an 82-amino-acid chain: MSYEKVLQAGKIVIGTKQTIRALKEGEATEVIVAEDADLPIIEKVTAAANEANVPVTKVDSMKKLGKACKIQVGAAAVAILR.

Belongs to the eukaryotic ribosomal protein eL8 family.

This is RNA-binding protein YbxF from Geobacillus stearothermophilus (Bacillus stearothermophilus).